The sequence spans 162 residues: 2-C-methyl-D-erythritol 2,4-cyclodiphosphate synthase (162 aa).

Residues Asp-12 and His-14 each coordinate a divalent metal cation. 4-CDP-2-C-methyl-D-erythritol 2-phosphate is bound by residues 12–14 (DVH) and 38–39 (HS). His-46 is an a divalent metal cation binding site. 4-CDP-2-C-methyl-D-erythritol 2-phosphate contacts are provided by residues 60-62 (DIG), 65-69 (FPDTD), and Arg-146.

The protein belongs to the IspF family. Homotrimer. It depends on a divalent metal cation as a cofactor.

The enzyme catalyses 4-CDP-2-C-methyl-D-erythritol 2-phosphate = 2-C-methyl-D-erythritol 2,4-cyclic diphosphate + CMP. It participates in isoprenoid biosynthesis; isopentenyl diphosphate biosynthesis via DXP pathway; isopentenyl diphosphate from 1-deoxy-D-xylulose 5-phosphate: step 4/6. Functionally, involved in the biosynthesis of isopentenyl diphosphate (IPP) and dimethylallyl diphosphate (DMAPP), two major building blocks of isoprenoid compounds. Catalyzes the conversion of 4-diphosphocytidyl-2-C-methyl-D-erythritol 2-phosphate (CDP-ME2P) to 2-C-methyl-D-erythritol 2,4-cyclodiphosphate (ME-CPP) with a corresponding release of cytidine 5-monophosphate (CMP). This Bordetella bronchiseptica (strain ATCC BAA-588 / NCTC 13252 / RB50) (Alcaligenes bronchisepticus) protein is 2-C-methyl-D-erythritol 2,4-cyclodiphosphate synthase.